Here is a 265-residue protein sequence, read N- to C-terminus: MIKWPQKVQESAHQTALPWQEALSIPLLTCLTEQEQSKLVTLAERFLQQKRLVPLQGFELDSLRSCRIALLFCLPVLELGLEWLDGFHEVLIYPAPFVVDDEWEDDIGLVHNQRIVQSGQSWQQGPIVLNWLDIQDSFDASGFNLIIHEVAHKLDTRNGDRASGVPFIPLREVAGWEHDLHAAMNNIQEEIELVGENAASIDAYAASDPAECFAVLSEYFFSAPELFAPRFPSLWQRFCQFYQQDPLQRLHHANDTDSFSATNVH.

The Zn(2+) site is built by His-111, His-148, His-152, and Glu-211.

The protein belongs to the MtfA family. Interacts with Mlc. Zn(2+) serves as cofactor.

It is found in the cytoplasm. Involved in the modulation of the activity of the glucose-phosphotransferase system (glucose-PTS). Interacts with the transcriptional repressor Mlc, preventing its interaction with DNA and leading to the modulation of expression of genes regulated by Mlc, including ptsG, which encodes the PTS system glucose-specific EIICB component. Functionally, shows zinc-dependent metallopeptidase activity. In Shigella dysenteriae serotype 1 (strain Sd197), this protein is Mlc titration factor A.